Consider the following 412-residue polypeptide: Gamma-glutamyl phosphate reductase (412 aa).

It belongs to the gamma-glutamyl phosphate reductase family.

It is found in the cytoplasm. The catalysed reaction is L-glutamate 5-semialdehyde + phosphate + NADP(+) = L-glutamyl 5-phosphate + NADPH + H(+). It participates in amino-acid biosynthesis; L-proline biosynthesis; L-glutamate 5-semialdehyde from L-glutamate: step 2/2. Functionally, catalyzes the NADPH-dependent reduction of L-glutamate 5-phosphate into L-glutamate 5-semialdehyde and phosphate. The product spontaneously undergoes cyclization to form 1-pyrroline-5-carboxylate. This is Gamma-glutamyl phosphate reductase from Streptococcus suis (strain 98HAH33).